The chain runs to 512 residues: Paraspeckle component 1 (512 aa).

Polar residues-rich tracts occupy residues 1–29 (MANP…STES) and 46–55 (DPSSANSEPQ). The interval 1–56 (MANPNLKQVNIQNNATFPHQQNVTRSTESPGDPKETMEAVAPSPQDPSSANSEPQE) is disordered. RRM domains follow at residues 76 to 148 (CRLF…FATH) and 150 to 231 (AALT…PTEQ). Residues 276–366 (LDEMDKQQRE…MIRHREQLDI (91 aa)) are a coiled coil. The segment at 451–512 (GPLQMGSPVG…DGPNNKRRRY (62 aa)) is disordered. A compositionally biased stretch (polar residues) spans 464 to 474 (GVDSPQPQQHS). Over residues 488–502 (GQSGFGRGSPVGGSF) the composition is skewed to gly residues.

Belongs to the PSPC family.

The protein resides in the nucleus speckle. Functionally, RNA-binding protein required for the formation of nuclear paraspeckles. Binds to poly(A), poly(G) and poly(U) RNA homopolymers. In Danio rerio (Zebrafish), this protein is Paraspeckle component 1 (pspc1).